Reading from the N-terminus, the 228-residue chain is Ribosomal RNA small subunit methyltransferase G (228 aa).

S-adenosyl-L-methionine contacts are provided by residues glycine 89, leucine 94, 140–141 (VE), and arginine 159.

The protein belongs to the methyltransferase superfamily. RNA methyltransferase RsmG family.

It is found in the cytoplasm. The enzyme catalyses guanosine(527) in 16S rRNA + S-adenosyl-L-methionine = N(7)-methylguanosine(527) in 16S rRNA + S-adenosyl-L-homocysteine. Its function is as follows. Specifically methylates the N7 position of guanine in position 527 of 16S rRNA. The sequence is that of Ribosomal RNA small subunit methyltransferase G from Burkholderia multivorans (strain ATCC 17616 / 249).